The sequence spans 64 residues: uncharacterized protein (64 aa).

This is an uncharacterized protein from African swine fever virus (strain Badajoz 1971 Vero-adapted) (Ba71V).